Consider the following 58-residue polypeptide: Large ribosomal subunit protein uL30 (58 aa).

It belongs to the universal ribosomal protein uL30 family. In terms of assembly, part of the 50S ribosomal subunit.

In Pseudomonas savastanoi pv. phaseolicola (strain 1448A / Race 6) (Pseudomonas syringae pv. phaseolicola (strain 1448A / Race 6)), this protein is Large ribosomal subunit protein uL30.